We begin with the raw amino-acid sequence, 329 residues long: Ketol-acid reductoisomerase (NADP(+)) (329 aa).

One can recognise a KARI N-terminal Rossmann domain in the interval 1-181 (MKIYYDQDAD…GGTRGGVLTT (181 aa)). NADP(+)-binding positions include 24–27 (YGSQ), Arg47, and 82–85 (DQHQ). The active site involves His107. Gly133 contacts NADP(+). The KARI C-terminal knotted domain maps to 182-327 (TFKEETETDL…AKLRGMMSWL (146 aa)). Positions 190, 194, 226, and 230 each coordinate Mg(2+). Residue Ser251 participates in substrate binding.

It belongs to the ketol-acid reductoisomerase family. Mg(2+) is required as a cofactor.

The catalysed reaction is (2R)-2,3-dihydroxy-3-methylbutanoate + NADP(+) = (2S)-2-acetolactate + NADPH + H(+). It carries out the reaction (2R,3R)-2,3-dihydroxy-3-methylpentanoate + NADP(+) = (S)-2-ethyl-2-hydroxy-3-oxobutanoate + NADPH + H(+). It participates in amino-acid biosynthesis; L-isoleucine biosynthesis; L-isoleucine from 2-oxobutanoate: step 2/4. Its pathway is amino-acid biosynthesis; L-valine biosynthesis; L-valine from pyruvate: step 2/4. In terms of biological role, involved in the biosynthesis of branched-chain amino acids (BCAA). Catalyzes an alkyl-migration followed by a ketol-acid reduction of (S)-2-acetolactate (S2AL) to yield (R)-2,3-dihydroxy-isovalerate. In the isomerase reaction, S2AL is rearranged via a Mg-dependent methyl migration to produce 3-hydroxy-3-methyl-2-ketobutyrate (HMKB). In the reductase reaction, this 2-ketoacid undergoes a metal-dependent reduction by NADPH to yield (R)-2,3-dihydroxy-isovalerate. The protein is Ketol-acid reductoisomerase (NADP(+)) of Solidesulfovibrio magneticus (strain ATCC 700980 / DSM 13731 / RS-1) (Desulfovibrio magneticus).